We begin with the raw amino-acid sequence, 115 residues long: Large ribosomal subunit protein bL19 (115 aa).

The protein belongs to the bacterial ribosomal protein bL19 family.

Functionally, this protein is located at the 30S-50S ribosomal subunit interface and may play a role in the structure and function of the aminoacyl-tRNA binding site. The protein is Large ribosomal subunit protein bL19 of Streptococcus sanguinis (strain SK36).